Here is a 365-residue protein sequence, read N- to C-terminus: MMIMQYIYPFTAIVGQEKMKKALILNAINPKIGGVLIRGEKGTAKSTAVRALADLLPEIEIVEGCPFNCDPNGNLCDICKEKKKRGELKTTKKKMKVVNLPIGATEDRVIGTLDIEKAIKEGIKALEPGILAEANRNILYIDEVNLLDDHIIDVLLDAAAMGWNIIEREGVKIKHPSRFILVGTMNPEEGELRPQILDRFGLMVDVEGLNDVKDRVEVIKRVEEFNENPEAFYKKFEEEQNKLRERIIKARELLNKVEISDDLLEFISKVCIELGIQTNRADITVVRTAKALAAYNGRTYVTIDDVKEAMELALPHRMRRKPFEPPQLNKEKLEQMINEFKQQNNKDNEEKEEHKDDDVKKNMMK.

40 to 47 (EKGTAKST) contacts ATP. Positions 340–365 (FKQQNNKDNEEKEEHKDDDVKKNMMK) are disordered. Basic and acidic residues predominate over residues 344–365 (NNKDNEEKEEHKDDDVKKNMMK).

The protein belongs to the Mg-chelatase subunits D/I family.

This Methanocaldococcus jannaschii (strain ATCC 43067 / DSM 2661 / JAL-1 / JCM 10045 / NBRC 100440) (Methanococcus jannaschii) protein is Magnesium-chelatase subunit ChlI homolog.